We begin with the raw amino-acid sequence, 251 residues long: MRKNIVAGNWKMNKTLQEGLALAKELDAALKGRTISCDVIIGTPFIHLASIAAAIDTTRIGVAAENCADKESGAYTGEVSAAMVASTGARYVIIGHSERRAYYHETSPILMEKVKLALSNGLTPIFCVGEVLEEREAGKHFEVVARQVEEALFTLDQTDFAKLILAYEPVWAIGTGKTATADQAQEMHAHIRKSIAAKYGKEVANGCSILYGGSCNAANAKELFSRADVDGGLIGGASLSVDKFLPIIEAF.

Residue 9–11 coordinates substrate; that stretch reads NWK. Catalysis depends on His-96, which acts as the Electrophile. The active-site Proton acceptor is Glu-168. Substrate is bound by residues Gly-174, Ser-214, and 235 to 236; that span reads GG.

The protein belongs to the triosephosphate isomerase family. As to quaternary structure, homodimer.

The protein localises to the cytoplasm. It carries out the reaction D-glyceraldehyde 3-phosphate = dihydroxyacetone phosphate. It participates in carbohydrate biosynthesis; gluconeogenesis. It functions in the pathway carbohydrate degradation; glycolysis; D-glyceraldehyde 3-phosphate from glycerone phosphate: step 1/1. Its function is as follows. Involved in the gluconeogenesis. Catalyzes stereospecifically the conversion of dihydroxyacetone phosphate (DHAP) to D-glyceraldehyde-3-phosphate (G3P). The sequence is that of Triosephosphate isomerase from Porphyromonas gingivalis (strain ATCC 33277 / DSM 20709 / CIP 103683 / JCM 12257 / NCTC 11834 / 2561).